Reading from the N-terminus, the 628-residue chain is 1-deoxy-D-xylulose-5-phosphate synthase (628 aa).

Residues histidine 72 and 113–115 (GHS) each bind thiamine diphosphate. Aspartate 144 is a binding site for Mg(2+). Residues 145-146 (GA), asparagine 173, tyrosine 284, and glutamate 363 contribute to the thiamine diphosphate site. A Mg(2+)-binding site is contributed by asparagine 173.

This sequence belongs to the transketolase family. DXPS subfamily. As to quaternary structure, homodimer. Mg(2+) is required as a cofactor. It depends on thiamine diphosphate as a cofactor.

It carries out the reaction D-glyceraldehyde 3-phosphate + pyruvate + H(+) = 1-deoxy-D-xylulose 5-phosphate + CO2. It participates in metabolic intermediate biosynthesis; 1-deoxy-D-xylulose 5-phosphate biosynthesis; 1-deoxy-D-xylulose 5-phosphate from D-glyceraldehyde 3-phosphate and pyruvate: step 1/1. In terms of biological role, catalyzes the acyloin condensation reaction between C atoms 2 and 3 of pyruvate and glyceraldehyde 3-phosphate to yield 1-deoxy-D-xylulose-5-phosphate (DXP). In Brevibacillus brevis (strain 47 / JCM 6285 / NBRC 100599), this protein is 1-deoxy-D-xylulose-5-phosphate synthase.